We begin with the raw amino-acid sequence, 610 residues long: Oxidoreductase ptaE (610 aa).

Positions 1–20 (MFQSILFLAFYGRPVFGSAA) are cleaved as a signal peptide. Plastocyanin-like domains lie at 67-181 (QIIS…HGPS) and 191-344 (PWLL…IVRY). 10 N-linked (GlcNAc...) asparagine glycosylation sites follow: asparagine 105, asparagine 111, asparagine 262, asparagine 277, asparagine 330, asparagine 356, asparagine 401, asparagine 409, asparagine 427, and asparagine 602. One can recognise a Plastocyanin-like 3 domain in the interval 425 to 568 (YVNWSEPSVK…IAIQFLEQPS (144 aa)).

This sequence belongs to the multicopper oxidase family.

Its pathway is secondary metabolite biosynthesis. Functionally, oxidoreductase; part of the gene cluster that mediates the biosynthesis of pestheic acid, a diphenyl ether which is a biosynthetic precursor of the unique chloropupukeananes. The biosynthesis initiates from condensation of acetate and malonate units catalyzed by the non-reducing PKS ptaA. As the ptaA protein is TE/CLC domain-deficient, hydrolysis and Claisen cyclization of the polyketide could be catalyzed by ptaB containing a beta-lactamase domain. The ptaB protein might hydrolyze the thioester bond between the ACP of ptaA and the intermediate to release atrochrysone carboxylic acid, which is spontaneously dehydrated to form endocrocin anthrone. Endocrocin anthrone is then converted to endocrocin, catalyzed by the anthrone oxygenase ptaC. Spontaneous decarboxylation of endocrocin occurs to generate emodin. An O-methyltransferase (ptaH or ptaI) could methylate emodin to form physcion. PtaJ could then catalyze the oxidative cleavage of physcion, and rotation of the intermediate could then afford desmethylisosulochrin. PtaF, a putative NADH-dependent oxidoreductase, might also participate in the oxidative cleavage step. Desmethylisosulochrin is then transformed by another O-methyltransferase (ptaH or ptaI) to form isosulochrin. Chlorination of isosulochrin by ptaM in the cyclohexadienone B ring then produces chloroisosulochrin. PtaE is responsible for the oxidative coupling reactions of both benzophenones isosulouchrin and chloroisosulochrin to RES-1214-1 and pestheic acid respectively, regardless of chlorination. In Pestalotiopsis fici (strain W106-1 / CGMCC3.15140), this protein is Oxidoreductase ptaE.